Consider the following 697-residue polypeptide: Polyribonucleotide nucleotidyltransferase (697 aa).

Positions 490 and 496 each coordinate Mg(2+). Residues 557 to 616 (PKVVTMTIKPEKIRDVIGPGGKKINEIIDETGVKLDIEQDGTIFIGAVDKDAIARARSII) enclose the KH domain. The S1 motif domain maps to 626–694 (GQVYEGKVKR…KQGRVNASHK (69 aa)).

The protein belongs to the polyribonucleotide nucleotidyltransferase family. It depends on Mg(2+) as a cofactor.

Its subcellular location is the cytoplasm. It carries out the reaction RNA(n+1) + phosphate = RNA(n) + a ribonucleoside 5'-diphosphate. Its function is as follows. Involved in mRNA degradation. Catalyzes the phosphorolysis of single-stranded polyribonucleotides processively in the 3'- to 5'-direction. The protein is Polyribonucleotide nucleotidyltransferase of Staphylococcus saprophyticus subsp. saprophyticus (strain ATCC 15305 / DSM 20229 / NCIMB 8711 / NCTC 7292 / S-41).